Consider the following 453-residue polypeptide: Bifunctional protein GlmU (453 aa).

A pyrophosphorylase region spans residues 1-226 (MKFSAVILAA…AIEVEGVNDR (226 aa)). UDP-N-acetyl-alpha-D-glucosamine-binding positions include 8-11 (LAAG), Lys22, Gln73, 78-79 (GT), 100-102 (YGD), Gly137, Glu151, Asn166, and Asn224. Asp102 serves as a coordination point for Mg(2+). Asn224 contacts Mg(2+). The interval 227-247 (AQLARLERAFQSMQAQKLLEQ) is linker. Residues 248–453 (GVMLRDPARF…TGWQRPVKQK (206 aa)) are N-acetyltransferase. Residues Arg330 and Lys348 each coordinate UDP-N-acetyl-alpha-D-glucosamine. His360 serves as the catalytic Proton acceptor. UDP-N-acetyl-alpha-D-glucosamine-binding residues include Tyr363 and Asn374. Acetyl-CoA is bound by residues Ala377, 383–384 (NY), Ser402, Ala420, and Arg437.

In the N-terminal section; belongs to the N-acetylglucosamine-1-phosphate uridyltransferase family. The protein in the C-terminal section; belongs to the transferase hexapeptide repeat family. As to quaternary structure, homotrimer. Mg(2+) is required as a cofactor.

Its subcellular location is the cytoplasm. The enzyme catalyses alpha-D-glucosamine 1-phosphate + acetyl-CoA = N-acetyl-alpha-D-glucosamine 1-phosphate + CoA + H(+). It catalyses the reaction N-acetyl-alpha-D-glucosamine 1-phosphate + UTP + H(+) = UDP-N-acetyl-alpha-D-glucosamine + diphosphate. The protein operates within nucleotide-sugar biosynthesis; UDP-N-acetyl-alpha-D-glucosamine biosynthesis; N-acetyl-alpha-D-glucosamine 1-phosphate from alpha-D-glucosamine 6-phosphate (route II): step 2/2. Its pathway is nucleotide-sugar biosynthesis; UDP-N-acetyl-alpha-D-glucosamine biosynthesis; UDP-N-acetyl-alpha-D-glucosamine from N-acetyl-alpha-D-glucosamine 1-phosphate: step 1/1. It participates in bacterial outer membrane biogenesis; LPS lipid A biosynthesis. Functionally, catalyzes the last two sequential reactions in the de novo biosynthetic pathway for UDP-N-acetylglucosamine (UDP-GlcNAc). The C-terminal domain catalyzes the transfer of acetyl group from acetyl coenzyme A to glucosamine-1-phosphate (GlcN-1-P) to produce N-acetylglucosamine-1-phosphate (GlcNAc-1-P), which is converted into UDP-GlcNAc by the transfer of uridine 5-monophosphate (from uridine 5-triphosphate), a reaction catalyzed by the N-terminal domain. This is Bifunctional protein GlmU from Vibrio parahaemolyticus serotype O3:K6 (strain RIMD 2210633).